The following is a 125-amino-acid chain: Large-conductance mechanosensitive channel (125 aa).

3 helical membrane passes run 19–39 (VGVI…SNLI), 42–62 (LIGI…IGSA), and 67–87 (GSFL…FLMV).

Belongs to the MscL family. In terms of assembly, homopentamer.

The protein resides in the cell membrane. Its function is as follows. Channel that opens in response to stretch forces in the membrane lipid bilayer. May participate in the regulation of osmotic pressure changes within the cell. This is Large-conductance mechanosensitive channel from Limosilactobacillus fermentum (strain NBRC 3956 / LMG 18251) (Lactobacillus fermentum).